A 214-amino-acid polypeptide reads, in one-letter code: Large ribosomal subunit protein uL3 (214 aa).

The interval 131–155 (GAQRTSHGNSRSHRVPGSIGMAQDP) is disordered. Glutamine 153 carries the post-translational modification N5-methylglutamine.

The protein belongs to the universal ribosomal protein uL3 family. Part of the 50S ribosomal subunit. Forms a cluster with proteins L14 and L19. Post-translationally, methylated by PrmB.

Its function is as follows. One of the primary rRNA binding proteins, it binds directly near the 3'-end of the 23S rRNA, where it nucleates assembly of the 50S subunit. The chain is Large ribosomal subunit protein uL3 from Neisseria gonorrhoeae (strain ATCC 700825 / FA 1090).